The primary structure comprises 414 residues: Gamma-glutamyl phosphate reductase (414 aa).

It belongs to the gamma-glutamyl phosphate reductase family.

The protein resides in the cytoplasm. It carries out the reaction L-glutamate 5-semialdehyde + phosphate + NADP(+) = L-glutamyl 5-phosphate + NADPH + H(+). The protein operates within amino-acid biosynthesis; L-proline biosynthesis; L-glutamate 5-semialdehyde from L-glutamate: step 2/2. Its function is as follows. Catalyzes the NADPH-dependent reduction of L-glutamate 5-phosphate into L-glutamate 5-semialdehyde and phosphate. The product spontaneously undergoes cyclization to form 1-pyrroline-5-carboxylate. This Kosmotoga olearia (strain ATCC BAA-1733 / DSM 21960 / TBF 19.5.1) protein is Gamma-glutamyl phosphate reductase.